The chain runs to 508 residues: Maturase K (508 aa).

The protein belongs to the intron maturase 2 family. MatK subfamily.

Its subcellular location is the plastid. It is found in the chloroplast. In terms of biological role, usually encoded in the trnK tRNA gene intron. Probably assists in splicing its own and other chloroplast group II introns. The sequence is that of Maturase K from Ranunculus trichophyllus (Whitewater crowfoot).